The chain runs to 448 residues: Clusterin (448 aa).

The first 21 residues, 1-21 (MKILLLCVALLLIWDNGMVLG), serve as a signal peptide directing secretion. Positions 77 to 80 (KKKK) match the Nuclear localization signal motif. Cystine bridges form between C101–C312, C112–C304, C115–C301, C120–C294, and C128–C284. Residue N102 is glycosylated (N-linked (GlcNAc...) asparagine). A Phosphoserine modification is found at S132. Residues N144, N290, N327, N353, and N373 are each glycosylated (N-linked (GlcNAc...) asparagine). Residue S395 is modified to Phosphoserine. The Nuclear localization signal motif lies at 442 to 446 (RRKSR).

Belongs to the clusterin family. In terms of assembly, antiparallel disulfide-linked heterodimer of an alpha chain and a beta chain. Self-associates and forms higher oligomers. Interacts with a broad range of misfolded proteins, including APP, APOC2 and LYZ. Slightly acidic pH promotes interaction with misfolded proteins. Forms high-molecular weight oligomers upon interaction with misfolded proteins. Interacts with APOA1, LRP2, CLUAP1 and PON1. Interacts with the complement membrane attack complex. Interacts (via alpha chain) with XRCC6. Interacts with SYVN1, COMMD1, BTRC, CUL1 and with ubiquitin and SCF (SKP1-CUL1-F-box protein) E3 ubiquitin-protein ligase complexes. Interacts (via alpha chain) with BAX in stressed cells, where BAX undergoes a conformation change leading to association with the mitochondrial membrane. Does not interact with BAX in unstressed cells. Found in a complex with LTF, CLU, EPPIN and SEMG1. Interacts (immaturely glycosylated pre-secreted form) with HSPA5; this interaction promotes CLU stability and facilitates stress-induced CLU retrotranslocation from the secretory pathway to the mitochondria, thereby reducing stress-induced apoptosis by stabilizing mitochondrial membrane integrity. Interacts with BCL2L1; this interaction releases and activates BAX and promotes cell death. Interacts with TGFBR2 and ACVR1. Interacts (secreted form) with STMN3; this interaction may act as an important modulator during neuronal differentiation. Interacts with VLDLR and LRP8. In terms of processing, proteolytically cleaved on its way through the secretory system, probably within the Golgi lumen. Proteolytic cleavage is not necessary for its chaperone activity. All non-secreted forms are not proteolytically cleaved. Chaperone activity of uncleaved forms is dependent on a non-reducing environment. Polyubiquitinated, leading to proteasomal degradation. Under cellular stress, the intracellular level of cleaved form is reduced due to proteasomal degradation. Post-translationally, extensively glycosylated with sulfated N-linked carbohydrates. About 30% of the protein mass is comprised of complex N-linked carbohydrate. Endoplasmic reticulum (ER) stress induces changes in glycosylation status and increases level of hypoglycosylated forms. Core carbohydrates are essential for chaperone activity. Non-secreted forms are hypoglycosylated or unglycosylated. Most abundant in stomach, liver, brain, and testis, with intermediate levels in heart, ovary and kidney.

Its subcellular location is the secreted. It is found in the nucleus. It localises to the cytoplasm. The protein resides in the mitochondrion membrane. The protein localises to the cytosol. Its subcellular location is the microsome. It is found in the endoplasmic reticulum. It localises to the mitochondrion. The protein resides in the perinuclear region. The protein localises to the cytoplasmic vesicle. Its subcellular location is the secretory vesicle. It is found in the chromaffin granule. Its function is as follows. Functions as extracellular chaperone that prevents aggregation of non native proteins. Prevents stress-induced aggregation of blood plasma proteins. Inhibits formation of amyloid fibrils by APP, APOC2, B2M, CALCA, CSN3, SNCA and aggregation-prone LYZ variants (in vitro). Does not require ATP. Maintains partially unfolded proteins in a state appropriate for subsequent refolding by other chaperones, such as HSPA8/HSC70. Does not refold proteins by itself. Binding to cell surface receptors triggers internalization of the chaperone-client complex and subsequent lysosomal or proteasomal degradation. When secreted, protects cells against apoptosis and against cytolysis by complement: inhibits assembly of the complement membrane attack complex (MAC) by preventing polymerization of C9 pore component of the MAC complex. Intracellular forms interact with ubiquitin and SCF (SKP1-CUL1-F-box protein) E3 ubiquitin-protein ligase complexes and promote the ubiquitination and subsequent proteasomal degradation of target proteins. Promotes proteasomal degradation of COMMD1 and IKBKB. Modulates NF-kappa-B transcriptional activity. Following stress, promotes apoptosis. Inhibits apoptosis when associated with the mitochondrial membrane by interference with BAX-dependent release of cytochrome c into the cytoplasm. Plays a role in the regulation of cell proliferation. Following ER stress, suppresses stress-induced apoptosis by stabilizing mitochondrial membrane integrity through interaction with HSPA5. When secreted, does not affect caspase or BAX-mediated intrinsic apoptosis and TNF-induced NF-kappa-B-activity. When secreted, acts as an important modulator during neuronal differentiation through interaction with STMN3. Plays a role in the clearance of immune complexes that arise during cell injury. The sequence is that of Clusterin from Mus musculus (Mouse).